The sequence spans 77 residues: Short neurotoxin OH-32 (77 aa).

An N-terminal signal peptide occupies residues 1–21; the sequence is MKNLLLTFLVVTIVCLDLGYT. Intrachain disulfides connect cysteine 24-cysteine 40, cysteine 33-cysteine 58, cysteine 62-cysteine 70, and cysteine 71-cysteine 76.

The protein belongs to the three-finger toxin family. Short-chain subfamily. Expressed by the venom gland.

Its subcellular location is the secreted. Its function is as follows. This three-finger toxin binds and inhibits the nicotinic acetylcholine receptor (nAChR). This chain is Short neurotoxin OH-32, found in Ophiophagus hannah (King cobra).